Reading from the N-terminus, the 222-residue chain is N-(5'-phosphoribosyl)anthranilate isomerase (222 aa).

This sequence belongs to the TrpF family.

It catalyses the reaction N-(5-phospho-beta-D-ribosyl)anthranilate = 1-(2-carboxyphenylamino)-1-deoxy-D-ribulose 5-phosphate. It functions in the pathway amino-acid biosynthesis; L-tryptophan biosynthesis; L-tryptophan from chorismate: step 3/5. This chain is N-(5'-phosphoribosyl)anthranilate isomerase, found in Brucella abortus (strain S19).